A 418-amino-acid polypeptide reads, in one-letter code: MSLLVIGINHTSATVDLREKVAFSPDKLTKALDELKNSDAIKSGVILSTCNRTEIYCEVKLGISSGYVINWLAEFHHVALDLLMPSIYIYEEQAAVKHLMRVSCGLDSLVLGEPQILGQVKKAFADAREHNAVEGVVEKLFQSDFSVAKRVRTETNIGGNAVSVAYAACTLARQIFESLAESTVMLVGAGETIELVAKHLNDAGCKQLIVANRTRERAMILADQFNADVISLPEIPEHLSKADIIISSTASPLPIIGKGMVESALKQRRHQPMLFVDIAVPRDIESEVADLNDVYLYSVDDLKSIIDHNIEQRKIEAIQAEAIVSEESAGFMTWIRSRQAVNSIRQYRENSESIRIELLQKSIQALASGQNAEKVLAELSNKLTNKLIHAPTLAMQQAAKNGEPDKLAVIRTSIGLDN.

Substrate is bound by residues 49-52 (TCNR), serine 108, 113-115 (EPQ), and glutamine 119. Cysteine 50 functions as the Nucleophile in the catalytic mechanism. 188-193 (GAGETI) lines the NADP(+) pocket.

Belongs to the glutamyl-tRNA reductase family. Homodimer.

The enzyme catalyses (S)-4-amino-5-oxopentanoate + tRNA(Glu) + NADP(+) = L-glutamyl-tRNA(Glu) + NADPH + H(+). It functions in the pathway porphyrin-containing compound metabolism; protoporphyrin-IX biosynthesis; 5-aminolevulinate from L-glutamyl-tRNA(Glu): step 1/2. Its function is as follows. Catalyzes the NADPH-dependent reduction of glutamyl-tRNA(Glu) to glutamate 1-semialdehyde (GSA). The sequence is that of Glutamyl-tRNA reductase from Aliivibrio salmonicida (strain LFI1238) (Vibrio salmonicida (strain LFI1238)).